The primary structure comprises 179 residues: Large ribosomal subunit protein uL5 (179 aa).

This sequence belongs to the universal ribosomal protein uL5 family. As to quaternary structure, part of the 50S ribosomal subunit; part of the 5S rRNA/L5/L18/L25 subcomplex. Contacts the 5S rRNA and the P site tRNA. Forms a bridge to the 30S subunit in the 70S ribosome.

This is one of the proteins that bind and probably mediate the attachment of the 5S RNA into the large ribosomal subunit, where it forms part of the central protuberance. In the 70S ribosome it contacts protein S13 of the 30S subunit (bridge B1b), connecting the 2 subunits; this bridge is implicated in subunit movement. Contacts the P site tRNA; the 5S rRNA and some of its associated proteins might help stabilize positioning of ribosome-bound tRNAs. The chain is Large ribosomal subunit protein uL5 from Buchnera aphidicola subsp. Baizongia pistaciae (strain Bp).